We begin with the raw amino-acid sequence, 266 residues long: Imidazole glycerol phosphate synthase subunit HisF (266 aa).

Active-site residues include Asp-11 and Asp-130.

It belongs to the HisA/HisF family. Heterodimer of HisH and HisF.

The protein localises to the cytoplasm. It catalyses the reaction 5-[(5-phospho-1-deoxy-D-ribulos-1-ylimino)methylamino]-1-(5-phospho-beta-D-ribosyl)imidazole-4-carboxamide + L-glutamine = D-erythro-1-(imidazol-4-yl)glycerol 3-phosphate + 5-amino-1-(5-phospho-beta-D-ribosyl)imidazole-4-carboxamide + L-glutamate + H(+). Its pathway is amino-acid biosynthesis; L-histidine biosynthesis; L-histidine from 5-phospho-alpha-D-ribose 1-diphosphate: step 5/9. In terms of biological role, IGPS catalyzes the conversion of PRFAR and glutamine to IGP, AICAR and glutamate. The HisF subunit catalyzes the cyclization activity that produces IGP and AICAR from PRFAR using the ammonia provided by the HisH subunit. In Nitrosopumilus maritimus (strain SCM1), this protein is Imidazole glycerol phosphate synthase subunit HisF.